A 601-amino-acid chain; its full sequence is NADH-quinone oxidoreductase subunit C/D (601 aa).

The tract at residues 1-191 (MKLTRDFPSN…DPFMLDAAKQ (191 aa)) is NADH dehydrogenase I subunit C. The segment at 215–601 (DYMFLNLGPN…IDFVMSDVDR (387 aa)) is NADH dehydrogenase I subunit D.

It in the N-terminal section; belongs to the complex I 30 kDa subunit family. This sequence in the C-terminal section; belongs to the complex I 49 kDa subunit family. As to quaternary structure, NDH-1 is composed of 13 different subunits. Subunits NuoB, CD, E, F, and G constitute the peripheral sector of the complex.

The protein resides in the cell inner membrane. It catalyses the reaction a quinone + NADH + 5 H(+)(in) = a quinol + NAD(+) + 4 H(+)(out). Functionally, NDH-1 shuttles electrons from NADH, via FMN and iron-sulfur (Fe-S) centers, to quinones in the respiratory chain. The immediate electron acceptor for the enzyme in this species is believed to be ubiquinone. Couples the redox reaction to proton translocation (for every two electrons transferred, four hydrogen ions are translocated across the cytoplasmic membrane), and thus conserves the redox energy in a proton gradient. The protein is NADH-quinone oxidoreductase subunit C/D of Aeromonas salmonicida (strain A449).